Reading from the N-terminus, the 87-residue chain is Probable Fe(2+)-trafficking protein (87 aa).

This sequence belongs to the Fe(2+)-trafficking protein family.

Its function is as follows. Could be a mediator in iron transactions between iron acquisition and iron-requiring processes, such as synthesis and/or repair of Fe-S clusters in biosynthetic enzymes. This Francisella philomiragia subsp. philomiragia (strain ATCC 25017 / CCUG 19701 / FSC 153 / O#319-036) protein is Probable Fe(2+)-trafficking protein.